A 382-amino-acid polypeptide reads, in one-letter code: Beta-1,4-galactosyltransferase 6 (382 aa).

The Cytoplasmic segment spans residues 1 to 15 (MSALKRMMRVSNRSL). A helical; Signal-anchor for type II membrane protein membrane pass occupies residues 16–35 (IAFIFFFSLSTSCLYFIYVA). Topologically, residues 36 to 382 (PGIANTYLFM…MPELAPIEDY (347 aa)) are lumenal. Asn-71, Asn-75, Asn-83, Asn-84, Asn-99, and Asn-122 each carry an N-linked (GlcNAc...) asparagine glycan. Cys-108 and Cys-152 are disulfide-bonded. UDP-alpha-D-galactose-binding positions include 163–167 (PFRNR), 202–204 (FNR), 229–230 (VD), Tyr-258, and Trp-290. A disulfide bridge links Cys-223 with Cys-242. Residue Asp-230 coordinates Mn(2+). 292–295 (GEDD) is a binding site for N-acetyl-D-glucosamine. The N-linked (GlcNAc...) asparagine glycan is linked to Asn-307. His-323 provides a ligand contact to Mn(2+). 323–324 (HH) contributes to the UDP-alpha-D-galactose binding site. Residue Arg-334 participates in N-acetyl-D-glucosamine binding. Residue Asn-367 is glycosylated (N-linked (GlcNAc...) asparagine).

It belongs to the glycosyltransferase 7 family. Mn(2+) is required as a cofactor. Mg(2+) serves as cofactor. Requires Ca(2+) as cofactor. In terms of tissue distribution, brain and kidney.

The protein resides in the golgi apparatus. The protein localises to the golgi stack membrane. The enzyme catalyses a beta-D-glucosyl-(1&lt;-&gt;1')-N-acylsphing-4-enine + UDP-alpha-D-galactose = a beta-D-Gal-(1-&gt;4)-beta-D-Glc-(1&lt;-&gt;1)-Cer(d18:1(4E)) + UDP + H(+). It functions in the pathway protein modification; protein glycosylation. It participates in sphingolipid metabolism. Its activity is regulated as follows. Inhibited by EDTA. Functionally, catalyzes the synthesis of lactosylceramide (LacCer) via the transfer of galactose from UDP-galactose to glucosylceramide (GlcCer). LacCer is the starting point in the biosynthesis of all gangliosides (membrane-bound glycosphingolipids) which play pivotal roles in the CNS including neuronal maturation and axonal and myelin formation. This is Beta-1,4-galactosyltransferase 6 from Mus musculus (Mouse).